Here is a 180-residue protein sequence, read N- to C-terminus: E1B protein, small T-antigen (180 aa).

The tract at residues 142–180 is disordered; it reads GPAAPLARQGSQQEEQQQRQEEEQVQEEMRSGLDPPTEN. Positions 157 to 172 are enriched in basic and acidic residues; that stretch reads QQQRQEEEQVQEEMRS.

It belongs to the adenoviridae E1B 19 kDa protein family.

The sequence is that of E1B protein, small T-antigen from Simian adenovirus serotype 7 (SAdV-7).